Consider the following 428-residue polypeptide: Chaperone SurA (428 aa).

The first 13 residues, methionine 1–alanine 13, serve as a signal peptide directing secretion. 2 PpiC domains span residues serine 164–glutamate 265 and arginine 276–glycine 375. The segment at threonine 211–alanine 230 is disordered.

Its subcellular location is the periplasm. The enzyme catalyses [protein]-peptidylproline (omega=180) = [protein]-peptidylproline (omega=0). Chaperone involved in the correct folding and assembly of outer membrane proteins. Recognizes specific patterns of aromatic residues and the orientation of their side chains, which are found more frequently in integral outer membrane proteins. May act in both early periplasmic and late outer membrane-associated steps of protein maturation. In Pseudomonas syringae pv. syringae (strain B728a), this protein is Chaperone SurA.